The sequence spans 338 residues: Ketol-acid reductoisomerase (NADP(+)) (338 aa).

The KARI N-terminal Rossmann domain maps to 1–181 (MKVFYDKDCD…GGGRAGIIET (181 aa)). Residues 24 to 27 (YGSQ), Arg-47, and Ser-52 contribute to the NADP(+) site. His-107 is a catalytic residue. Gly-133 is a binding site for NADP(+). Residues 182-327 (DFREETETDL…GKLRAMMPWI (146 aa)) enclose the KARI C-terminal knotted domain. Positions 190, 194, 226, and 230 each coordinate Mg(2+). Position 251 (Ser-251) interacts with substrate.

This sequence belongs to the ketol-acid reductoisomerase family. The cofactor is Mg(2+).

It catalyses the reaction (2R)-2,3-dihydroxy-3-methylbutanoate + NADP(+) = (2S)-2-acetolactate + NADPH + H(+). The catalysed reaction is (2R,3R)-2,3-dihydroxy-3-methylpentanoate + NADP(+) = (S)-2-ethyl-2-hydroxy-3-oxobutanoate + NADPH + H(+). It functions in the pathway amino-acid biosynthesis; L-isoleucine biosynthesis; L-isoleucine from 2-oxobutanoate: step 2/4. It participates in amino-acid biosynthesis; L-valine biosynthesis; L-valine from pyruvate: step 2/4. Involved in the biosynthesis of branched-chain amino acids (BCAA). Catalyzes an alkyl-migration followed by a ketol-acid reduction of (S)-2-acetolactate (S2AL) to yield (R)-2,3-dihydroxy-isovalerate. In the isomerase reaction, S2AL is rearranged via a Mg-dependent methyl migration to produce 3-hydroxy-3-methyl-2-ketobutyrate (HMKB). In the reductase reaction, this 2-ketoacid undergoes a metal-dependent reduction by NADPH to yield (R)-2,3-dihydroxy-isovalerate. This chain is Ketol-acid reductoisomerase (NADP(+)), found in Bordetella petrii (strain ATCC BAA-461 / DSM 12804 / CCUG 43448).